Here is a 480-residue protein sequence, read N- to C-terminus: Beta-amyrin 28-monooxygenase (480 aa).

Residues 3 to 23 (VFFLSLLLICVLSVSIRLYLL) form a helical membrane-spanning segment. C427 contributes to the heme binding site.

It belongs to the cytochrome P450 family. Heme serves as cofactor. Expressed in leaves, stems and fruit skin.

The protein localises to the membrane. It carries out the reaction beta-amyrin + 3 reduced [NADPH--hemoprotein reductase] + 3 O2 = oleanolate + 3 oxidized [NADPH--hemoprotein reductase] + 4 H2O + 4 H(+). Catalyzes the carboxylation of beta-amyrin at the C-28 position to form oleanolic acid. May be involved in saponin biosynthesis in fruit skin. The chain is Beta-amyrin 28-monooxygenase from Vitis vinifera (Grape).